The primary structure comprises 244 residues: Transmembrane protein 176A (244 aa).

Position 42 is a phosphoserine (Ser-42). The next 4 helical transmembrane spans lie at 60-80, 92-112, 122-142, and 204-224; these read VLVA…VLGG, SEGA…VAFL, ALMR…AIVI, and LLGI…VYIW.

It belongs to the TMEM176 family. Interacts with MCOLN2. Specifically expressed in lung, kidney and spleen.

It is found in the membrane. This chain is Transmembrane protein 176A (Tmem176a), found in Mus musculus (Mouse).